Reading from the N-terminus, the 237-residue chain is Protein UL24 homolog (237 aa).

The protein belongs to the herpesviridae UL24 family.

The polypeptide is Protein UL24 homolog (20) (Equus caballus (Horse)).